Reading from the N-terminus, the 167-residue chain is Acetolactate synthase small subunit (167 aa).

Residues 7–81 (TLSVLVEAKP…NVIKIVELED (75 aa)) enclose the ACT domain.

This sequence belongs to the acetolactate synthase small subunit family. As to quaternary structure, dimer of large and small chains.

The enzyme catalyses 2 pyruvate + H(+) = (2S)-2-acetolactate + CO2. It participates in amino-acid biosynthesis; L-isoleucine biosynthesis; L-isoleucine from 2-oxobutanoate: step 1/4. It functions in the pathway amino-acid biosynthesis; L-valine biosynthesis; L-valine from pyruvate: step 1/4. This chain is Acetolactate synthase small subunit (ilvH), found in Mycobacterium avium.